We begin with the raw amino-acid sequence, 236 residues long: MNHTLRSITLVLACVASLSANADPKTPGTHKGYSTIDMTTAGMPADVKMISVADIQKELQGKAPFAVGFDIDDTTLFSTPVFYRGQQEFSPNGYSYLTNQDFWDKANCGWDAFSMPKNIAKELIAMHQERGDSIYFITGRTGSDCNFTTEYLKKTFDIKDMHDVIFAGSSRTEYTKTKYIKNNDIKIYYGDADGDIISARDAGAEGIRVMRAANSSYTPIPKNGIYGERVLKDSQY.

Positions 1–22 are cleaved as a signal peptide; sequence MNHTLRSITLVLACVASLSANA. Catalysis depends on D70, which acts as the Nucleophile. D70 and D72 together coordinate Mg(2+). Catalysis depends on D72, which acts as the Proton donor. Residues 138 to 139 and K176 contribute to the substrate site; that span reads TG. D191 contributes to the Mg(2+) binding site.

This sequence belongs to the class B bacterial acid phosphatase family. Homotetramer. Mg(2+) is required as a cofactor.

It localises to the periplasm. It catalyses the reaction a phosphate monoester + H2O = an alcohol + phosphate. Its function is as follows. Dephosphorylates several organic phosphate monoesters. Also has a phosphotransferase activity catalyzing the transfer of low-energy phosphate groups from organic phosphate monoesters to free hydroxyl groups of various organic compounds. The protein is Class B acid phosphatase of Marinomonas sp. (strain MWYL1).